Reading from the N-terminus, the 190-residue chain is Protein FAM210B, mitochondrial (190 aa).

A mitochondrion-targeting transit peptide spans 1–58 (MAGLLTLLGPAGRVSTRLRPLAPWLLGTATSCAPPLWALALSHPVPDARLLRTARGDC). Residues 56-66 (GDCLSRQEPNR) show a composition bias toward basic and acidic residues. The interval 56 to 81 (GDCLSRQEPNRTPEPGGSVTGTEKKL) is disordered. One can recognise a DUF1279 domain in the interval 78–189 (EKKLSRTQQL…VGLFKPPATK (112 aa)). 2 helical membrane passes run 97–117 (VGVSMHIGISLVSLGIFYTVV) and 148–168 (FVVAYAIHKLFAPVRISITLV).

Belongs to the FAM210 family. In terms of tissue distribution, expressed in late erythroblast differentiation stages.

It is found in the mitochondrion. The protein localises to the mitochondrion outer membrane. Functionally, plays a role in erythroid differentiation. Involved in cell proliferation and tumor cell growth suppression. Involved in the metabolic reprogramming of cancer cells in a PDK4-dependent manner. The protein is Protein FAM210B, mitochondrial of Mus musculus (Mouse).